The sequence spans 522 residues: Protein tweety homolog 3 (522 aa).

The Extracellular segment spans residues 1–43 (MAAAISYTPPWWVNLLHRLPHLNLQWESLNGDFRPEDPDYQQS). A helical transmembrane segment spans residues 44–64 (LMLLACVALSCLALDLLFLLF). Residues 65 to 87 (YSFWFCCRHRKTEENTNADCCCT) lie on the Cytoplasmic side of the membrane. A helical transmembrane segment spans residues 88 to 108 (VWCVIVATLVCSAGIAVGFYG). Residues 109–211 (NGETSDGIHR…VDLFDWYRWL (103 aa)) lie on the Extracellular side of the membrane. Residues Glu111 and Asp114 each contribute to the Ca(2+) site. N-linked (GlcNAc...) asparagine glycosylation is found at Asn127 and Asn145. The helical transmembrane segment at 212 to 232 (GYLGLLLFHVFICLLVLFGLI) threads the bilayer. The Cytoplasmic segment spans residues 233–238 (RNSKGT). The helical transmembrane segment at 239 to 259 (LICVCFLGMMALIISWASMGL) threads the bilayer. The Extracellular segment spans residues 260 to 386 (ELAVAVGSSD…LTGFCYDGVE (127 aa)). 2 cysteine pairs are disulfide-bonded: Cys271–Cys381 and Cys299–Cys366. A glycan (N-linked (GlcNAc...) asparagine) is linked at Asn351. Residues 387–407 (GLIYLVLFSFVTALMFSSIVC) form a helical membrane-spanning segment. Over 408 to 522 (SVPHTWQQRR…TNRPETDPVH (115 aa)) the chain is Cytoplasmic. A disordered region spans residues 483–522 (QNPRCENTPLIGRESPPPSYTSSMRAKYLATNRPETDPVH).

This sequence belongs to the tweety family. In terms of assembly, homotetramer; disulfide-linked. Forms cis-homodimers in the presence of Ca(2+).

Its subcellular location is the cell membrane. It catalyses the reaction chloride(in) = chloride(out). The catalysed reaction is L-glutamate(out) = L-glutamate(in). In terms of biological role, may act as a calcium-independent, swelling-dependent volume-regulated anion channel (VRAC-swell) which plays a pivotal role in the process of regulatory volume decrease (RVD) in the brain through the efflux of anions like chloride and organic osmolytes like glutamate. Probable large-conductance Ca(2+)-activated chloride channel. In Xenopus laevis (African clawed frog), this protein is Protein tweety homolog 3 (ttyh3).